Consider the following 283-residue polypeptide: Formamidopyrimidine-DNA glycosylase (283 aa).

Pro2 (schiff-base intermediate with DNA) is an active-site residue. Glu3 (proton donor) is an active-site residue. Catalysis depends on Lys58, which acts as the Proton donor; for beta-elimination activity. DNA is bound by residues His100, Arg119, and Arg162. The FPG-type zinc-finger motif lies at 247–283 (RVYGREGLPCVTPGCSGTVGRIVQSGRSSFHCPLCQR). Residue Arg273 is the Proton donor; for delta-elimination activity of the active site.

This sequence belongs to the FPG family. In terms of assembly, monomer. Zn(2+) serves as cofactor.

It carries out the reaction Hydrolysis of DNA containing ring-opened 7-methylguanine residues, releasing 2,6-diamino-4-hydroxy-5-(N-methyl)formamidopyrimidine.. It catalyses the reaction 2'-deoxyribonucleotide-(2'-deoxyribose 5'-phosphate)-2'-deoxyribonucleotide-DNA = a 3'-end 2'-deoxyribonucleotide-(2,3-dehydro-2,3-deoxyribose 5'-phosphate)-DNA + a 5'-end 5'-phospho-2'-deoxyribonucleoside-DNA + H(+). Functionally, involved in base excision repair of DNA damaged by oxidation or by mutagenic agents. Acts as a DNA glycosylase that recognizes and removes damaged bases. Has a preference for oxidized purines, such as 7,8-dihydro-8-oxoguanine (8-oxoG). Has AP (apurinic/apyrimidinic) lyase activity and introduces nicks in the DNA strand. Cleaves the DNA backbone by beta-delta elimination to generate a single-strand break at the site of the removed base with both 3'- and 5'-phosphates. This Cereibacter sphaeroides (strain ATCC 17029 / ATH 2.4.9) (Rhodobacter sphaeroides) protein is Formamidopyrimidine-DNA glycosylase.